The following is a 493-amino-acid chain: Ribulose bisphosphate carboxylase large chain (493 aa).

Asn-132 contributes to the substrate binding site. Cys-181 carries the post-translational modification S-nitrosocysteine. Thr-182 provides a ligand contact to substrate. The active-site Proton acceptor is the Lys-184. A substrate-binding site is contributed by Lys-186. Mg(2+) is bound by residues Lys-210, Asp-212, and Glu-213. Position 210 is an N6-carboxylysine (Lys-210). His-302 serves as the catalytic Proton acceptor. 3 residues coordinate substrate: Arg-303, His-335, and Ser-387. An S-nitrosocysteine modification is found at Cys-460.

The protein belongs to the RuBisCO large chain family. Type I subfamily. In terms of assembly, heterohexadecamer of 8 large chains and 8 small chains. The cofactor is Mg(2+).

It localises to the plastid. The protein localises to the chloroplast. It catalyses the reaction 2 (2R)-3-phosphoglycerate + 2 H(+) = D-ribulose 1,5-bisphosphate + CO2 + H2O. It carries out the reaction D-ribulose 1,5-bisphosphate + O2 = 2-phosphoglycolate + (2R)-3-phosphoglycerate + 2 H(+). Functionally, ruBisCO catalyzes two reactions: the carboxylation of D-ribulose 1,5-bisphosphate, the primary event in carbon dioxide fixation, as well as the oxidative fragmentation of the pentose substrate in the photorespiration process. Both reactions occur simultaneously and in competition at the same active site. Carbon dioxide and oxygen bind in the same pocket of the enzyme in a similar manner. This Galdieria sulphuraria (Red alga) protein is Ribulose bisphosphate carboxylase large chain.